The primary structure comprises 275 residues: Voltage-dependent calcium channel gamma-5 subunit (275 aa).

The next 4 membrane-spanning stretches (helical) occupy residues 8–28, 103–123, 129–149, and 181–201; these read ALTLLSSVFAVCGLGLLGIAV, FPLVSLFFMFIGFILSNIGHI, ILAFVSGIFFILSGLSLVVGL, and FAAISFLLTESAGVMSVYLFM.

The protein belongs to the PMP-22/EMP/MP20 family. CACNG subfamily. In terms of assembly, the L-type calcium channel is composed of five subunits: alpha-1, alpha-2/delta, beta and gamma. Acts as an auxiliary subunit for AMPA-selective glutamate receptors (AMPARs). Found in a complex with GRIA1, GRIA2, GRIA3, GRIA4, CNIH2, CNIH3, CACNG2, CACNG3, CACNG4, CACNG7 and CACNG8. Interacts with GRIA1, GRIA2, GRIA3 and GRIA4. As to expression, brain. Enriched in Bergman glia, as well as a variety of neuronal populations including locus coeruleus, olfactory bulb, lateral septal nucleus, interpeduncular nucleus, and the CA2 and rostral/medial CA1 regions of hippocampus.

The protein localises to the membrane. Its subcellular location is the postsynaptic density membrane. Its function is as follows. Regulates the gating properties of AMPA-selective glutamate receptors (AMPARs). Modulates their gating properties by accelerating their rates of activation, deactivation and desensitization. Displays subunit-specific AMPA receptor regulation. Shows specificity for GRIA1, GRIA4 and the long isoform of GRIA2. Thought to stabilize the calcium channel in an inactivated (closed) state. This chain is Voltage-dependent calcium channel gamma-5 subunit (Cacng5), found in Mus musculus (Mouse).